The sequence spans 259 residues: Glucose-1-phosphate thymidylyltransferase (259 aa).

This sequence belongs to the inositol monophosphatase superfamily.

It carries out the reaction dTTP + alpha-D-glucose 1-phosphate + H(+) = dTDP-alpha-D-glucose + diphosphate. It participates in antibiotic biosynthesis; streptomycin biosynthesis. The sequence is that of Glucose-1-phosphate thymidylyltransferase (strO) from Streptomyces griseus.